Consider the following 165-residue polypeptide: 3-hydroxyacyl-[acyl-carrier-protein] dehydratase FabZ (165 aa).

Histidine 64 is a catalytic residue.

This sequence belongs to the thioester dehydratase family. FabZ subfamily.

It localises to the cytoplasm. It carries out the reaction a (3R)-hydroxyacyl-[ACP] = a (2E)-enoyl-[ACP] + H2O. In terms of biological role, involved in unsaturated fatty acids biosynthesis. Catalyzes the dehydration of short chain beta-hydroxyacyl-ACPs and long chain saturated and unsaturated beta-hydroxyacyl-ACPs. The polypeptide is 3-hydroxyacyl-[acyl-carrier-protein] dehydratase FabZ (Acidiphilium cryptum (strain JF-5)).